A 732-amino-acid chain; its full sequence is uncharacterized protein (732 aa).

The tract at residues 145–207 (ETLRDSVINP…RRRPEMASPH (63 aa)) is disordered. The span at 170 to 179 (KGHETLERGS) shows a compositional bias: basic and acidic residues. Residues 176–524 (ERGSKALGPE…KKIPFLGYLI (349 aa)) form the Reverse transcriptase domain.

It is found in the mitochondrion. This is an uncharacterized protein from Marchantia polymorpha (Common liverwort).